The sequence spans 191 residues: MPGSEDLRKGKDQMHSHRKRTMFTKKQLEDLNILFNENPYPNPSLQKEMASKIDIHPTVLQVWFKNHRAKLKKAKCKHIHQKQETPQPPIPEGGVSTSVGLRNADTLPRLPNAAHPIGLVYTGHRVPSFQLILYPNLKVPANDFIGHRIVHFGCCRDPNIYCLYPILESQVCAPSFHSGSPACSSNQSRER.

Basic and acidic residues predominate over residues 1–15 (MPGSEDLRKGKDQMH). The tract at residues 1–20 (MPGSEDLRKGKDQMHSHRKR) is disordered. Positions 16 to 75 (SHRKRTMFTKKQLEDLNILFNENPYPNPSLQKEMASKIDIHPTVLQVWFKNHRAKLKKAK) form a DNA-binding region, homeobox.

This sequence belongs to the paired homeobox family.

It localises to the nucleus. Functionally, transcription factor that acts as a repressor. This Homo sapiens (Human) protein is Divergent paired-related homeobox.